The following is a 185-amino-acid chain: MINEIKQDSEKRMKKTIEALHTDMSKIRTGRANASLLDHVMVDYYGSPTPLSQVANITTSDSRTILVTPWEKSMVAAIEKAILNSDLGLNPATAGTAIRVPMPPLTEERRKELIKVVRHEGEQGRVSIRNIRRDANNQLKELVKEKAISEDDERRAAEAIQKLTDRYISEVDAVLAEKEKDLMEI.

It belongs to the RRF family.

Its subcellular location is the cytoplasm. In terms of biological role, responsible for the release of ribosomes from messenger RNA at the termination of protein biosynthesis. May increase the efficiency of translation by recycling ribosomes from one round of translation to another. The sequence is that of Ribosome-recycling factor from Legionella pneumophila (strain Corby).